A 361-amino-acid polypeptide reads, in one-letter code: Dynein axonemal assembly factor 8 (361 aa).

Disordered stretches follow at residues aspartate 65–lysine 191 and alanine 309–leucine 334. Residues threonine 136–proline 157 show a composition bias toward polar residues. 2 positions are modified to phosphoserine: serine 142 and serine 144. The segment covering glycine 321–leucine 334 has biased composition (low complexity).

The protein localises to the dynein axonemal particle. Its subcellular location is the cytoplasm. In cyliated cells, dynein axonemal particle-specific protein required for deployment of ODA to the axoneme. Interacts with outer dynein arm (ODA) subunits. The protein is Dynein axonemal assembly factor 8 (DNAAF8) of Bos taurus (Bovine).